The primary structure comprises 482 residues: Pancreatic lipase-related protein 2 (482 aa).

The N-terminal stretch at 1–30 (MPMDVRGCLFPSVQMLLCWLVSLLLATVGG) is a signal peptide. Cys34 and Cys40 form a disulfide bridge. Asn92 carries N-linked (GlcNAc...) asparagine glycosylation. The interval 106 to 118 (IHGFIDKGEEGWL) is required for galactolipase activity. An intrachain disulfide couples Cys122 to Cys133. Catalysis depends on Ser184, which acts as the Nucleophile. Asp208 serves as the catalytic Charge relay system. 4 residues coordinate Ca(2+): Glu219, Arg222, Asp224, and Asp227. Residues Cys269 and Cys293 are joined by a disulfide bond. The tract at residues 270 to 292 (QKNILSTIVDINGIWEGTRNFAA) is required for galactolipase activity. The Charge relay system role is filled by His295. Disulfide bonds link Cys317–Cys328 and Cys331–Cys336. N-linked (GlcNAc...) asparagine glycans are attached at residues Asn366 and Asn441. The region spanning 370–482 (WRYKVSVTLS…EDVLQSLYPC (113 aa)) is the PLAT domain. An intrachain disulfide couples Cys466 to Cys482.

Belongs to the AB hydrolase superfamily. Lipase family. As to expression, expressed in acinar cells of pancreas (at protein level).

The protein resides in the secreted. Its subcellular location is the zymogen granule membrane. It localises to the cell projection. It is found in the neuron projection. The enzyme catalyses a triacylglycerol + H2O = a diacylglycerol + a fatty acid + H(+). It carries out the reaction a 1,2-diacyl-3-O-(beta-D-galactosyl)-sn-glycerol + 2 H2O = 3-beta-D-galactosyl-sn-glycerol + 2 a fatty acid + 2 H(+). The catalysed reaction is 1,2,3-tri-(9Z-octadecenoyl)-glycerol + H2O = di-(9Z)-octadecenoylglycerol + (9Z)-octadecenoate + H(+). It catalyses the reaction di-(9Z)-octadecenoylglycerol + H2O = (9Z-octadecenoyl)-glycerol + (9Z)-octadecenoate + H(+). The enzyme catalyses (9Z-octadecenoyl)-glycerol + H2O = glycerol + (9Z)-octadecenoate + H(+). It carries out the reaction 1-(9Z-octadecenoyl)-glycerol + H2O = glycerol + (9Z)-octadecenoate + H(+). The catalysed reaction is 1,2,3-tripropanoylglycerol + H2O = dipropanoylglycerol + propanoate + H(+). It catalyses the reaction 1,2,3-tributanoylglycerol + H2O = dibutanoylglycerol + butanoate + H(+). The enzyme catalyses 1,2,3-trioctanoylglycerol + H2O = dioctanoylglycerol + octanoate + H(+). It carries out the reaction 1,2-didecanoylglycerol + H2O = decanoylglycerol + decanoate + H(+). The catalysed reaction is long chain 1,2-diacyl-3-O-beta-D-galactosyl-sn-glycerol + H2O = long chain acyl-3-O-beta-D-galactosyl-sn-glycerol + a fatty acid + H(+). It catalyses the reaction 1,2-dioctanoyl-3-O-beta-D-galactosyl-sn-glycerol + H2O = octanoyl-3-(beta-D-galactosyl)-sn-glycerol + octanoate + H(+). The enzyme catalyses 1,2-didodecanoyl-3-beta-D-galactosyl-sn-glycerol + H2O = dodecanoyl-3-beta-D-galactosyl-sn-glycerol + dodecanoate + H(+). It carries out the reaction 1-beta-D-galactosyl-2,3-didodecanoyl-sn-glycerol + H2O = 1-beta-D-galactosyl-dodecanoyl-sn-glycerol + dodecanoate + H(+). The catalysed reaction is a 1,2-diacyl-3-O-[alpha-D-galactosyl-(1-&gt;6)-beta-D-galactosyl]-sn-glycerol + H2O = acyl-3-O-[alpha-D-galactosyl-(1-&gt;6)-beta-D-galactosyl]-sn-glycerol + a fatty acid + H(+). It catalyses the reaction long chain 1,2-diacyl-3-O-[alpha-D-galactosyl-(1-&gt;6)-beta-D-galactosyl]-sn-glycerol + H2O = long chain acyl-3-O-[alpha-D-galactosyl-(1-&gt;6)-beta-D-galactosyl]-sn-glycerol + a fatty acid + H(+). The enzyme catalyses 1,2-dioctanoyl-3-O-[alpha-D-galactosyl-(1-&gt;6)-beta-D-galactosyl]-sn-glycerol + H2O = octanoyl-3-O-[alpha-D-galactosyl-(1-&gt;6)-beta-D-galactosyl]-sn-glycerol + octanoate + H(+). It carries out the reaction 1,2-didodecanoyl-3-O-[alpha-D-galactosyl-(1-&gt;6)-beta-D-galactosyl]-sn-glycerol + H2O = dodecanoyl-3-O-[alpha-D-galactosyl-(1-&gt;6)-beta-D-galactosyl]-sn-glycerol + dodecanoate + H(+). The catalysed reaction is a 1,2-diacyl-sn-glycero-3-phosphocholine + H2O = a monoacyl-sn-glycero-3-phosphocholine + a fatty acid + H(+). The protein operates within glycerolipid metabolism; triacylglycerol degradation. It functions in the pathway glycolipid metabolism. With respect to regulation, CLPS stimulates triacylglycerol lipase activity. Triacylglycerol lipase activity is not inhibited by increasing bile salt concentration. Lipase that primarily hydrolyzes triglycerides and galactosylglycerides. In neonates, may play a major role in pancreatic digestion of dietary fats such as milk fat globules enriched in long-chain triglycerides. Hydrolyzes short-, medium- and long-chain fatty acyls in triglycerides without apparent positional specificity. Can completely deacylate triacylglycerols. When the liver matures and bile salt synthesis increases, likely functions mainly as a galactolipase and monoacylglycerol lipase. Hydrolyzes monogalactosyldiglycerols (MGDG) and digalactosyldiacylglycerols (DGDG) present in a plant-based diet, releasing long-chain polyunsaturated fatty acids. Hydrolyzes medium- and long-chain fatty acyls in galactolipids. May act together with LIPF to hydrolyze partially digested triglycerides. Hydrolyzes long-chain monoglycerides with high efficiency. In cytotoxic T cells, contributes to perforin-dependent cell lysis, but is unlikely to mediate direct cytotoxicity. Also has low phospholipase activity. In neurons, required for the localization of the phospholipid 1-oleoyl-2-palmitoyl-PC (OPPC) to neurite tips through acyl chain remodeling of membrane phospholipids. The resulting OPPC-rich lipid membrane domain recruits the t-SNARE protein STX4 by selectively interacting with the STX4 transmembrane domain and this promotes surface expression of the dopamine transporter SLC6A3/DAT at neurite tips by facilitating fusion of SLC6A3-containing transport vesicles with the plasma membrane. This is Pancreatic lipase-related protein 2 from Mus musculus (Mouse).